We begin with the raw amino-acid sequence, 353 residues long: Mitochondrial glutathione transporter SLC25A40 (353 aa).

Solcar repeat units follow at residues 14–132 (ITPF…LFAL), 140–224 (RSDL…GKWW), and 234–328 (PTVA…GKAF). A run of 6 helical transmembrane segments spans residues 20 to 40 (MMASCSGAIITSLLVTPLDVV), 104 to 124 (LWSGLPPTLIMAVPATVIYFT), 143 to 163 (LAPLFAGAIARVGSATVISPL), 200 to 221 (WGPTLLRDVPFSAMYWFNYEKG), 237 to 257 (AITFTAGALSGSIASIITLPF), and 299 to 319 (GLFAGFMPRLIKVAPACAIMI).

The protein belongs to the mitochondrial carrier (TC 2.A.29) family.

The protein resides in the mitochondrion inner membrane. The enzyme catalyses glutathione(in) = glutathione(out). Its function is as follows. Probable mitochondrial transporter required for glutathione import into mitochondria. Glutathione, which plays key roles in oxidative metabolism, is produced exclusively in the cytosol and is imported in many organelles. Mitochondrial glutathione is required for the activity and stability of proteins containing iron-sulfur clusters. In Danio rerio (Zebrafish), this protein is Mitochondrial glutathione transporter SLC25A40.